Consider the following 1442-residue polypeptide: Clustered mitochondria protein homolog (1442 aa).

2 disordered regions span residues 38–100 and 237–258; these read NYRN…KKPD and GRSE…KDRP. Residues 82–100 are compositionally biased toward basic and acidic residues; sequence SEGEQQKDKTAAEDKKKPD. The 243-residue stretch at 394–636 folds into the Clu domain; that stretch reads RAEDTFSSKL…RTFPPDVNFL (243 aa). 2 stretches are compositionally biased toward basic and acidic residues: residues 696 to 714 and 737 to 763; these read QKQE…EPKA and ESKE…KVET. 2 disordered regions span residues 696–763 and 949–984; these read QKQE…KVET and SESD…SFQC. Residues 949 to 958 are compositionally biased toward polar residues; that stretch reads SESDALTKSG. TPR repeat units follow at residues 1087–1120, 1213–1246, and 1248–1281; these read AYNF…LNNV, ALLD…NIKY, and GEKS…EKET. A disordered region spans residues 1373–1442; it reads RQKEGGTSEQ…SSNASAQQVS (70 aa). A compositionally biased stretch (low complexity) spans 1380–1390; it reads SEQAAAAQASQ. Polar residues predominate over residues 1424–1442; it reads ASSSKQADNSSNASAQQVS.

The protein belongs to the CLU family.

The protein resides in the cytoplasm. MRNA-binding protein involved in proper cytoplasmic distribution of mitochondria. This chain is Clustered mitochondria protein homolog, found in Aedes aegypti (Yellowfever mosquito).